A 305-amino-acid polypeptide reads, in one-letter code: UDP-3-O-acyl-N-acetylglucosamine deacetylase (305 aa).

Zn(2+) contacts are provided by histidine 79, histidine 238, and aspartate 242. Catalysis depends on histidine 265, which acts as the Proton donor.

Belongs to the LpxC family. The cofactor is Zn(2+).

The enzyme catalyses a UDP-3-O-[(3R)-3-hydroxyacyl]-N-acetyl-alpha-D-glucosamine + H2O = a UDP-3-O-[(3R)-3-hydroxyacyl]-alpha-D-glucosamine + acetate. It functions in the pathway glycolipid biosynthesis; lipid IV(A) biosynthesis; lipid IV(A) from (3R)-3-hydroxytetradecanoyl-[acyl-carrier-protein] and UDP-N-acetyl-alpha-D-glucosamine: step 2/6. Functionally, catalyzes the hydrolysis of UDP-3-O-myristoyl-N-acetylglucosamine to form UDP-3-O-myristoylglucosamine and acetate, the committed step in lipid A biosynthesis. This chain is UDP-3-O-acyl-N-acetylglucosamine deacetylase, found in Escherichia fergusonii (strain ATCC 35469 / DSM 13698 / CCUG 18766 / IAM 14443 / JCM 21226 / LMG 7866 / NBRC 102419 / NCTC 12128 / CDC 0568-73).